Reading from the N-terminus, the 231-residue chain is MSDKILIVDDEHEIADLVELYLKNENYTVFKYYTAKEALECIDKSEIDLAILDIMLPGTSGLTICQKIRDKHTYPIIMLTGKDTEVDKITGLTIGADDYITKPFRPLELIARVKAQLRRYKKFSGVKEQNENVIVHSGLVINVNTHECYLNEKQLSLTPTEFSILRILCENKGNVVSSELLFHEIWGDEYFSKSNNTITVHIRHLREKMNDTIDNPKYIKTVWGVGYKIEK.

Residues 4–117 (KILIVDDEHE…ELIARVKAQL (114 aa)) enclose the Response regulatory domain. D53 carries the 4-aspartylphosphate modification. The ompR/PhoB-type DNA-binding region spans 131–231 (ENVIVHSGLV…VWGVGYKIEK (101 aa)).

In terms of assembly, monomer. Post-translationally, phosphorylated by VanS. Dephosphorylated by VanS. Can be phosphorylated nonenzymatically by acetyl-phosphate.

Its subcellular location is the cytoplasm. Its function is as follows. Member of the two-component regulatory system VanS/VanR. Binds to the promoter regions of target genes, including vanH and vanR; phosphorylation of VanR increases binding affinity to the vanH and vanR promoters significantly. DNA binding may be inhibited by the cognate sensor protein, VanS. Activates the transcription of vanH, vanA and vanX in response to vancomycin which results in vancomycin resistance. Involved in conferring vancomycin resistance. The polypeptide is Regulatory protein VanR (vanR) (Enterococcus faecium (Streptococcus faecium)).